The chain runs to 286 residues: MRLLPRLLLLLLLVFPATVLFRGGPRGLLAVAQDLTEDEETVEDSIIEDEDDEAEVEEDEPTDLVEDKEEEDVSGEPEASPSADTTILFVKGEDFPANNIVKFLVGFTNKGTEDFIVESLDASFRYPQDYQFYIQNFTALPLNTVVPPQRQATFEYSFIPAEPMGGRPFGLVINLNYKDLNGNVFQDAVFNQTVTVIEREDGLDGETIFMYMFLAGLGLLVIVGLHQLLESRKRKRPIQKVEMGTSSQNDVDMSWIPQETLNQINKASPRRLPRKRAQKRSVGSDE.

The first 18 residues, 1-18, serve as a signal peptide directing secretion; the sequence is MRLLPRLLLLLLLVFPAT. Over 19–207 the chain is Lumenal; it reads VLFRGGPRGL…EREDGLDGET (189 aa). Acidic residues predominate over residues 39 to 75; the sequence is EETVEDSIIEDEDDEAEVEEDEPTDLVEDKEEEDVSG. Residues 39–83 are disordered; it reads EETVEDSIIEDEDDEAEVEEDEPTDLVEDKEEEDVSGEPEASPSA. Residues N136 and N191 are each glycosylated (N-linked (GlcNAc...) asparagine). The helical transmembrane segment at 208–228 threads the bilayer; it reads IFMYMFLAGLGLLVIVGLHQL. Over 229-286 the chain is Cytoplasmic; the sequence is LESRKRKRPIQKVEMGTSSQNDVDMSWIPQETLNQINKASPRRLPRKRAQKRSVGSDE. Residue S247 is modified to Phosphoserine. Residue T260 is modified to Phosphothreonine. The tract at residues 261 to 286 is disordered; sequence LNQINKASPRRLPRKRAQKRSVGSDE. A Phosphoserine modification is found at S268. Positions 268 to 279 are enriched in basic residues; sequence SPRRLPRKRAQK.

Belongs to the TRAP-alpha family. In terms of assembly, heterotetramer of TRAP-alpha, TRAP-beta, TRAP-delta and TRAP-gamma. Interacts with palmitoylated calnexin (CALX), the interaction is required for efficient folding of glycosylated proteins.

Its subcellular location is the endoplasmic reticulum membrane. TRAP proteins are part of a complex whose function is to bind calcium to the ER membrane and thereby regulate the retention of ER resident proteins. May be involved in the recycling of the translocation apparatus after completion of the translocation process or may function as a membrane-bound chaperone facilitating folding of translocated proteins. In Homo sapiens (Human), this protein is Translocon-associated protein subunit alpha (SSR1).